The sequence spans 398 residues: 4-hydroxy-3-methylbut-2-enyl diphosphate reductase (398 aa).

Cys-66 provides a ligand contact to [4Fe-4S] cluster. A (2E)-4-hydroxy-3-methylbut-2-enyl diphosphate-binding site is contributed by His-96. His-96 is a binding site for dimethylallyl diphosphate. His-96 contributes to the isopentenyl diphosphate binding site. A [4Fe-4S] cluster-binding site is contributed by Cys-157. His-185 serves as a coordination point for (2E)-4-hydroxy-3-methylbut-2-enyl diphosphate. Dimethylallyl diphosphate is bound at residue His-185. Residue His-185 participates in isopentenyl diphosphate binding. Glu-187 serves as the catalytic Proton donor. Thr-250 contributes to the (2E)-4-hydroxy-3-methylbut-2-enyl diphosphate binding site. Cys-288 contacts [4Fe-4S] cluster. Residues Ser-317, Ser-318, Asn-319, and Ser-379 each coordinate (2E)-4-hydroxy-3-methylbut-2-enyl diphosphate. 4 residues coordinate dimethylallyl diphosphate: Ser-317, Ser-318, Asn-319, and Ser-379. The isopentenyl diphosphate site is built by Ser-317, Ser-318, Asn-319, and Ser-379.

Belongs to the IspH family. It depends on [4Fe-4S] cluster as a cofactor.

It carries out the reaction isopentenyl diphosphate + 2 oxidized [2Fe-2S]-[ferredoxin] + H2O = (2E)-4-hydroxy-3-methylbut-2-enyl diphosphate + 2 reduced [2Fe-2S]-[ferredoxin] + 2 H(+). It catalyses the reaction dimethylallyl diphosphate + 2 oxidized [2Fe-2S]-[ferredoxin] + H2O = (2E)-4-hydroxy-3-methylbut-2-enyl diphosphate + 2 reduced [2Fe-2S]-[ferredoxin] + 2 H(+). Its pathway is isoprenoid biosynthesis; dimethylallyl diphosphate biosynthesis; dimethylallyl diphosphate from (2E)-4-hydroxy-3-methylbutenyl diphosphate: step 1/1. It functions in the pathway isoprenoid biosynthesis; isopentenyl diphosphate biosynthesis via DXP pathway; isopentenyl diphosphate from 1-deoxy-D-xylulose 5-phosphate: step 6/6. Its function is as follows. Catalyzes the conversion of 1-hydroxy-2-methyl-2-(E)-butenyl 4-diphosphate (HMBPP) into a mixture of isopentenyl diphosphate (IPP) and dimethylallyl diphosphate (DMAPP). Acts in the terminal step of the DOXP/MEP pathway for isoprenoid precursor biosynthesis. The chain is 4-hydroxy-3-methylbut-2-enyl diphosphate reductase from Synechococcus sp. (strain CC9311).